Here is a 304-residue protein sequence, read N- to C-terminus: tRNA pseudouridine synthase B (304 aa).

D38 (nucleophile) is an active-site residue.

The protein belongs to the pseudouridine synthase TruB family. Type 1 subfamily.

It catalyses the reaction uridine(55) in tRNA = pseudouridine(55) in tRNA. In terms of biological role, responsible for synthesis of pseudouridine from uracil-55 in the psi GC loop of transfer RNAs. In Listeria innocua serovar 6a (strain ATCC BAA-680 / CLIP 11262), this protein is tRNA pseudouridine synthase B.